Consider the following 134-residue polypeptide: Interleukin-5 (134 aa).

An N-terminal signal peptide occupies residues 1-19 (MRMLLHLSLLALGAAYVYA). Thr22 carries O-linked (GalNAc...) threonine glycosylation. Asn47 and Asn90 each carry an N-linked (GlcNAc...) asparagine glycan.

This sequence belongs to the IL-5 family. In terms of assembly, homodimer; disulfide-linked. Interacts with IL5RA. Interacts with CSF2RB.

The protein resides in the secreted. Its function is as follows. Homodimeric cytokine expressed predominantly by T-lymphocytes and NK cells that plays an important role in the survival, differentiation, and chemotaxis of eosinophils. Also acts on activated and resting B-cells to induce immunoglobulin production, growth, and differentiation. Mechanistically, exerts its biological effects through a receptor composed of IL5RA subunit and the cytokine receptor common subunit beta/CSF2RB. Binding to the receptor leads to activation of various kinases including LYN, SYK and JAK2 and thereby propagates signals through the RAS-MAPK and JAK-STAT5 pathways respectively. The sequence is that of Interleukin-5 (IL5) from Macaca mulatta (Rhesus macaque).